Consider the following 347-residue polypeptide: GMP reductase (347 aa).

A108 to A131 lines the NADP(+) pocket. Residues G181 and G183 each contribute to the K(+) site. The active-site Thioimidate intermediate is C186. Position 216 to 239 (I216 to V239) interacts with NADP(+).

Belongs to the IMPDH/GMPR family. GuaC type 1 subfamily. As to quaternary structure, homotetramer.

The enzyme catalyses IMP + NH4(+) + NADP(+) = GMP + NADPH + 2 H(+). Its function is as follows. Catalyzes the irreversible NADPH-dependent deamination of GMP to IMP. It functions in the conversion of nucleobase, nucleoside and nucleotide derivatives of G to A nucleotides, and in maintaining the intracellular balance of A and G nucleotides. In Shewanella halifaxensis (strain HAW-EB4), this protein is GMP reductase.